A 321-amino-acid chain; its full sequence is Anthranilate phosphoribosyltransferase (321 aa).

5-phospho-alpha-D-ribose 1-diphosphate is bound by residues Gly72, 75-76, Thr80, 82-85, 99-107, and Ser111; these read GD, NVST, and KHGNVSITS. Gly72 serves as a coordination point for anthranilate. Mg(2+) is bound at residue Ser84. Position 102 (Asn102) interacts with anthranilate. Arg157 lines the anthranilate pocket. Residues Asp216 and Glu217 each contribute to the Mg(2+) site.

This sequence belongs to the anthranilate phosphoribosyltransferase family. As to quaternary structure, homodimer. Requires Mg(2+) as cofactor.

The catalysed reaction is N-(5-phospho-beta-D-ribosyl)anthranilate + diphosphate = 5-phospho-alpha-D-ribose 1-diphosphate + anthranilate. The protein operates within amino-acid biosynthesis; L-tryptophan biosynthesis; L-tryptophan from chorismate: step 2/5. In terms of biological role, catalyzes the transfer of the phosphoribosyl group of 5-phosphorylribose-1-pyrophosphate (PRPP) to anthranilate to yield N-(5'-phosphoribosyl)-anthranilate (PRA). The polypeptide is Anthranilate phosphoribosyltransferase (Methanococcus maripaludis (strain C5 / ATCC BAA-1333)).